Here is a 209-residue protein sequence, read N- to C-terminus: Uracil phosphoribosyltransferase (209 aa).

Residues R79, R104, and 131–139 (DPMLATGNS) each bind 5-phospho-alpha-D-ribose 1-diphosphate. Residues I194 and 199–201 (GDA) contribute to the uracil site. Residue D200 participates in 5-phospho-alpha-D-ribose 1-diphosphate binding.

This sequence belongs to the UPRTase family. Mg(2+) serves as cofactor.

It carries out the reaction UMP + diphosphate = 5-phospho-alpha-D-ribose 1-diphosphate + uracil. It functions in the pathway pyrimidine metabolism; UMP biosynthesis via salvage pathway; UMP from uracil: step 1/1. Allosterically activated by GTP. Catalyzes the conversion of uracil and 5-phospho-alpha-D-ribose 1-diphosphate (PRPP) to UMP and diphosphate. The polypeptide is Uracil phosphoribosyltransferase (Acidovorax sp. (strain JS42)).